The primary structure comprises 650 residues: NAC domain-containing protein 54 (650 aa).

An NAC domain is found at 6–156 (LPPGFRFHPT…AYALCRVFKK (151 aa)). A DNA-binding region spans residues 105–162 (VGMKKTLVYYRGRAPHGSRTDWVMHEYRLDERECETDTGLQDAYALCRVFKKTAPGPK).

In terms of tissue distribution, expressed in leaves, roots and flowers.

It is found in the nucleus. In terms of biological role, transcription factor that functions as a regulator of the jasmonate (JA) signaling pathway. May regulate the expression of genes encoding JA biosynthetic enzymes, such as lipoxygenase 7 (CM-LOX1), allene oxide synthase 2 (AOS2) and OPDA reductase 7 (OPR7). Involved in abscisic acid-induced leaf senescence. Activates the abscisic acid (ABA) signaling-associated gene ABI5 and the senescence-associated gene NYC1 by directly binding to the mitochondrial dysfunction motif (MDM) present in their promoters. Possesses transcriptional activator activity in yeast. Required for the multiplication of the rice dwarf virus (RDV). In Oryza sativa subsp. japonica (Rice), this protein is NAC domain-containing protein 54.